A 477-amino-acid polypeptide reads, in one-letter code: Ribulose bisphosphate carboxylase large chain (477 aa).

Residues 1-2 constitute a propeptide that is removed on maturation; it reads MS. P3 bears the N-acetylproline mark. An N6,N6,N6-trimethyllysine modification is found at K14. Residues N123 and T173 each coordinate substrate. The active-site Proton acceptor is the K175. K177 lines the substrate pocket. The Mg(2+) site is built by K201, D203, and E204. The residue at position 201 (K201) is an N6-carboxylysine. The Proton acceptor role is filled by H294. Substrate-binding residues include R295, H327, and S379.

Belongs to the RuBisCO large chain family. Type I subfamily. In terms of assembly, heterohexadecamer of 8 large chains and 8 small chains; disulfide-linked. The disulfide link is formed within the large subunit homodimers. Mg(2+) is required as a cofactor. The disulfide bond which can form in the large chain dimeric partners within the hexadecamer appears to be associated with oxidative stress and protein turnover.

It localises to the plastid. The protein resides in the chloroplast. It catalyses the reaction 2 (2R)-3-phosphoglycerate + 2 H(+) = D-ribulose 1,5-bisphosphate + CO2 + H2O. It carries out the reaction D-ribulose 1,5-bisphosphate + O2 = 2-phosphoglycolate + (2R)-3-phosphoglycerate + 2 H(+). RuBisCO catalyzes two reactions: the carboxylation of D-ribulose 1,5-bisphosphate, the primary event in carbon dioxide fixation, as well as the oxidative fragmentation of the pentose substrate in the photorespiration process. Both reactions occur simultaneously and in competition at the same active site. The sequence is that of Ribulose bisphosphate carboxylase large chain from Atropa belladonna (Belladonna).